The following is a 643-amino-acid chain: 1-deoxy-D-xylulose-5-phosphate synthase (643 aa).

Thiamine diphosphate contacts are provided by residues H78 and 119–121 (AHS). D150 serves as a coordination point for Mg(2+). Thiamine diphosphate contacts are provided by residues 151–152 (GS), N179, Y288, and E370. N179 contributes to the Mg(2+) binding site.

Belongs to the transketolase family. DXPS subfamily. As to quaternary structure, homodimer. Mg(2+) is required as a cofactor. It depends on thiamine diphosphate as a cofactor.

It catalyses the reaction D-glyceraldehyde 3-phosphate + pyruvate + H(+) = 1-deoxy-D-xylulose 5-phosphate + CO2. It participates in metabolic intermediate biosynthesis; 1-deoxy-D-xylulose 5-phosphate biosynthesis; 1-deoxy-D-xylulose 5-phosphate from D-glyceraldehyde 3-phosphate and pyruvate: step 1/1. In terms of biological role, catalyzes the acyloin condensation reaction between C atoms 2 and 3 of pyruvate and glyceraldehyde 3-phosphate to yield 1-deoxy-D-xylulose-5-phosphate (DXP). In Brucella abortus (strain 2308), this protein is 1-deoxy-D-xylulose-5-phosphate synthase.